Reading from the N-terminus, the 185-residue chain is Ribosome-recycling factor (185 aa).

Belongs to the RRF family.

The protein localises to the cytoplasm. Its function is as follows. Responsible for the release of ribosomes from messenger RNA at the termination of protein biosynthesis. May increase the efficiency of translation by recycling ribosomes from one round of translation to another. In Thioalkalivibrio sulfidiphilus (strain HL-EbGR7), this protein is Ribosome-recycling factor.